Here is a 620-residue protein sequence, read N- to C-terminus: Chaperone protein DnaK (620 aa).

Residue Thr-174 is modified to Phosphothreonine; by autocatalysis. A disordered region spans residues 590–620 (AAGAGPDMSGAGPQGDTYAGDDVVDGDYREV).

This sequence belongs to the heat shock protein 70 family.

In terms of biological role, acts as a chaperone. In Lachnoclostridium phytofermentans (strain ATCC 700394 / DSM 18823 / ISDg) (Clostridium phytofermentans), this protein is Chaperone protein DnaK.